Consider the following 60-residue polypeptide: MKISALVMITLLICSMMILCQGQKILSNRCNNSSECIPHCIRIFGTRAAKCINRKCYCYP.

Residues 1 to 22 form the signal peptide; sequence MKISALVMITLLICSMMILCQG. Disulfide bonds link C30–C51, C36–C56, and C40–C58.

This sequence belongs to the short scorpion toxin superfamily. Potassium channel inhibitor family. Expressed by the venom gland.

It localises to the secreted. Weakly inhibits Kv11.1/KCNH2/ERG1, Kv1.2/KCNA2 and Kv1.3/KCNA3 voltage-gated potassium channels. This Buthus israelis (Israeli scorpion) protein is Potassium channel toxin-like Tx677.